The chain runs to 348 residues: Pheromone P-factor receptor (348 aa).

The next 7 membrane-spanning stretches (helical) occupy residues 46–69 (LLTGMTLSAQLALGVLTILMVCLL), 79–103 (VFVFNSASIVAMCLRAILNIVTICS), 125–141 (VFNILILLLAPVIIFTA), 162–180 (IMTVISACLTVLVLAFWIT), 207–225 (YFIAKILFAFSIIFHSGVF), 249–267 (CILVISCQCLIVPATFTII), and 283–301 (CLLIISLPLSSLWASSTAL).

It belongs to the G-protein coupled receptor 4 family.

It is found in the membrane. Functionally, receptor for the peptide pheromone P-factor, a mating factor of S.pombe. Pheromone signaling is essential for initiation of meiosis in S.pombe; P-factor signaling alone may be sufficient. The protein is Pheromone P-factor receptor (mam2) of Schizosaccharomyces pombe (strain 972 / ATCC 24843) (Fission yeast).